The sequence spans 240 residues: Transcriptional regulatory protein ChvI (240 aa).

In terms of domain architecture, Response regulatory spans 3–116 (TIALVDDDRN…LLVERVKAIL (114 aa)). The Mg(2+) site is built by Asp-8, Asp-9, and Asp-52. The residue at position 52 (Asp-52) is a 4-aspartylphosphate. The segment at residues 139–238 (SRSLERGQLV…LYGVGYRFRE (100 aa)) is a DNA-binding region (ompR/PhoB-type).

Mg(2+) serves as cofactor. Phosphorylated by ChvG.

The protein resides in the cytoplasm. Its pathway is glycan metabolism; exopolysaccharide biosynthesis. Its function is as follows. Member of a two-component regulatory system ChvG(ExoS)/ChvI involved in regulating the production of succinoglycan. This chain is Transcriptional regulatory protein ChvI (chvI), found in Rhizobium meliloti (strain 1021) (Ensifer meliloti).